The following is a 105-amino-acid chain: TPR repeat-containing protein PA0015 (105 aa).

2 TPR repeats span residues 17-50 and 52-84; these read ALLRFGLGKGYLDAGDAERAAEHLQRCVEQDPKY and AGWKLLGKARQAAGDLAGARQAWEQGLATAATH.

The polypeptide is TPR repeat-containing protein PA0015 (Pseudomonas aeruginosa (strain ATCC 15692 / DSM 22644 / CIP 104116 / JCM 14847 / LMG 12228 / 1C / PRS 101 / PAO1)).